The sequence spans 537 residues: Multidrug resistance protein Stp (537 aa).

14 consecutive transmembrane segments (helical) span residues 6–26 (LLTLIATGLGLFMIFLDALIV), 46–66 (WVVASYSLGMAVFIMSAATLA), 77–97 (IGVSLFTLGSIACGLAPSIAV), 104–124 (AQGLGAAAVSVTSLALVSAAF), 136–156 (IWTAIASIGTTTGPTLGGLLV), 163–183 (SIFYVNLPMGALVLFLTLCYV), 200–220 (LLFIVAVGALVYAVIEGPQIG), 223–243 (SVQTIVMLWTAAVGCALFVWL), 262–282 (YALAIATICTVFFAVYGMLLL), 300–320 (LMILPFSAAVAIVSPLVGHLV), 327–347 (VPILAGLCMLMLGLLMLIFSE), 352–372 (ALVLVGLGLCGSGVALCLTPI), 397–417 (AIGSTIGFAVLGSVLAAWLSA), and 478–498 (VALLVATATLAVVFLAGWRWF).

It belongs to the major facilitator superfamily. EmrB family.

The protein localises to the cell membrane. Its function is as follows. Contributes to spectinomycin and tetracycline resistance. The sequence is that of Multidrug resistance protein Stp (stp) from Mycobacterium tuberculosis (strain ATCC 25618 / H37Rv).